A 79-amino-acid polypeptide reads, in one-letter code: Acyl carrier protein (79 aa).

The Carrier domain maps to 2-77; the sequence is SDVAERVKKI…DAIDFIKANA (76 aa). Serine 37 bears the O-(pantetheine 4'-phosphoryl)serine mark.

Belongs to the acyl carrier protein (ACP) family. Post-translationally, 4'-phosphopantetheine is transferred from CoA to a specific serine of apo-ACP by AcpS. This modification is essential for activity because fatty acids are bound in thioester linkage to the sulfhydryl of the prosthetic group.

The protein localises to the cytoplasm. It participates in lipid metabolism; fatty acid biosynthesis. Carrier of the growing fatty acid chain in fatty acid biosynthesis. The protein is Acyl carrier protein of Azospirillum brasilense.